The primary structure comprises 860 residues: Leucine--tRNA ligase (860 aa).

Residues 42-52 (PYPSGRLHMGH) carry the 'HIGH' region motif. Positions 619-623 (KMSKS) match the 'KMSKS' region motif. ATP is bound at residue Lys-622.

This sequence belongs to the class-I aminoacyl-tRNA synthetase family.

It is found in the cytoplasm. It carries out the reaction tRNA(Leu) + L-leucine + ATP = L-leucyl-tRNA(Leu) + AMP + diphosphate. This is Leucine--tRNA ligase from Escherichia coli O9:H4 (strain HS).